Consider the following 451-residue polypeptide: Bifunctional protein GlmU (451 aa).

Residues 1 to 229 are pyrophosphorylase; that stretch reads MQRNAVILAA…FNEIMGVNDR (229 aa). UDP-N-acetyl-alpha-D-glucosamine contacts are provided by residues 8 to 11, K22, Q72, and 77 to 78; these read LAAG and GT. D102 provides a ligand contact to Mg(2+). Residues G139, E154, and N227 each coordinate UDP-N-acetyl-alpha-D-glucosamine. N227 contributes to the Mg(2+) binding site. The linker stretch occupies residues 230-250; the sequence is VMLSNAEKALQQRINIEHMRN. Residues 251–451 are N-acetyltransferase; the sequence is GVTIIDPTTT…QITKEGYLKK (201 aa). Residues R332 and K350 each contribute to the UDP-N-acetyl-alpha-D-glucosamine site. H362 serves as the catalytic Proton acceptor. Residues Y365 and N376 each contribute to the UDP-N-acetyl-alpha-D-glucosamine site. Residues 385 to 386, A422, and R439 contribute to the acetyl-CoA site; that span reads NY.

It in the N-terminal section; belongs to the N-acetylglucosamine-1-phosphate uridyltransferase family. In the C-terminal section; belongs to the transferase hexapeptide repeat family. Homotrimer. Requires Mg(2+) as cofactor.

It is found in the cytoplasm. The enzyme catalyses alpha-D-glucosamine 1-phosphate + acetyl-CoA = N-acetyl-alpha-D-glucosamine 1-phosphate + CoA + H(+). The catalysed reaction is N-acetyl-alpha-D-glucosamine 1-phosphate + UTP + H(+) = UDP-N-acetyl-alpha-D-glucosamine + diphosphate. It participates in nucleotide-sugar biosynthesis; UDP-N-acetyl-alpha-D-glucosamine biosynthesis; N-acetyl-alpha-D-glucosamine 1-phosphate from alpha-D-glucosamine 6-phosphate (route II): step 2/2. It functions in the pathway nucleotide-sugar biosynthesis; UDP-N-acetyl-alpha-D-glucosamine biosynthesis; UDP-N-acetyl-alpha-D-glucosamine from N-acetyl-alpha-D-glucosamine 1-phosphate: step 1/1. The protein operates within bacterial outer membrane biogenesis; LPS lipid A biosynthesis. Catalyzes the last two sequential reactions in the de novo biosynthetic pathway for UDP-N-acetylglucosamine (UDP-GlcNAc). The C-terminal domain catalyzes the transfer of acetyl group from acetyl coenzyme A to glucosamine-1-phosphate (GlcN-1-P) to produce N-acetylglucosamine-1-phosphate (GlcNAc-1-P), which is converted into UDP-GlcNAc by the transfer of uridine 5-monophosphate (from uridine 5-triphosphate), a reaction catalyzed by the N-terminal domain. The chain is Bifunctional protein GlmU from Staphylococcus haemolyticus (strain JCSC1435).